We begin with the raw amino-acid sequence, 281 residues long: MQKKYYELFFIVEERYKNLFLDFAFDLGIEAIEEKDNGVYIRSHESLEELSWALEIFAQKLTTTFNLNHKIISNLSLVEKENKDWIQEYKKGIKPILVDNVYIHTTWQEEKKNFINIKINPALAFGSGHHESTYSCVKFLQKFSKSKLRALDLGCGSGILGIIMAKFGCNVEICDTDELAIDSSLENARLNGVDFHKAWCGSIDKANGLYNLIVANIIADVILILEKDIKNHLEDNAILILSGILDKYSTRIKEKFQDLELIDEMQINEWCSFVYKNNKKG.

Residues T133, G154, D175, and N216 each coordinate S-adenosyl-L-methionine.

The protein belongs to the methyltransferase superfamily. PrmA family.

It localises to the cytoplasm. The catalysed reaction is L-lysyl-[protein] + 3 S-adenosyl-L-methionine = N(6),N(6),N(6)-trimethyl-L-lysyl-[protein] + 3 S-adenosyl-L-homocysteine + 3 H(+). In terms of biological role, methylates ribosomal protein L11. The polypeptide is Ribosomal protein L11 methyltransferase (Campylobacter jejuni subsp. jejuni serotype O:6 (strain 81116 / NCTC 11828)).